The sequence spans 286 residues: NAD kinase (286 aa).

Residue D66 is the Proton acceptor of the active site. NAD(+)-binding positions include 66-67 (DG), 137-138 (ND), R148, R165, D167, and 178-183 (TAYSMS).

This sequence belongs to the NAD kinase family. A divalent metal cation serves as cofactor.

The protein localises to the cytoplasm. It carries out the reaction NAD(+) + ATP = ADP + NADP(+) + H(+). Functionally, involved in the regulation of the intracellular balance of NAD and NADP, and is a key enzyme in the biosynthesis of NADP. Catalyzes specifically the phosphorylation on 2'-hydroxyl of the adenosine moiety of NAD to yield NADP. This Chlorobium chlorochromatii (strain CaD3) protein is NAD kinase.